We begin with the raw amino-acid sequence, 227 residues long: Small ribosomal subunit protein uS3 (227 aa).

One can recognise a KH type-2 domain in the interval 24 to 94; that stretch reads LDEYLEEELG…RVSIEVKELP (71 aa). Residues 207 to 227 form a disordered region; that stretch reads EEVEDELKELIGKSEDEAEGA.

Belongs to the universal ribosomal protein uS3 family. Part of the 30S ribosomal subunit.

Binds the lower part of the 30S subunit head. This chain is Small ribosomal subunit protein uS3, found in Methanopyrus kandleri (strain AV19 / DSM 6324 / JCM 9639 / NBRC 100938).